Consider the following 70-residue polypeptide: Small ribosomal subunit protein bS18c (70 aa).

This sequence belongs to the bacterial ribosomal protein bS18 family. Part of the 30S ribosomal subunit.

Its subcellular location is the plastid. It is found in the chloroplast. The sequence is that of Small ribosomal subunit protein bS18c from Pyropia yezoensis (Susabi-nori).